The sequence spans 124 residues: Transcription initiation factor TFIID subunit 13 (124 aa).

The segment covering 1 to 16 has biased composition (acidic residues); it reads MADEEEDPTFEEENEE. The segment at 1–28 is disordered; that stretch reads MADEEEDPTFEEENEEIGGGAEGGQGKR. The region spanning 32 to 74 is the Histone-fold domain; the sequence is FSKELRCMMYGFGDDQNPYTESVDILEDLVIEFITEMTHKAMS.

The protein belongs to the TAF13 family. In terms of assembly, component of the TFIID basal transcription factor complex, composed of TATA-box-binding protein TBP, and a number of TBP-associated factors (TAFs), including TAF1, TAF2, TAF3, TAF4, TAF5, TAF6, TAF7, TAF8, TAF9, TAF10, TAF11, TAF12 and TAF13. Interacts with TBP, and more strongly with TAF10 and TAF11.

Its subcellular location is the nucleus. In terms of biological role, the TFIID basal transcription factor complex plays a major role in the initiation of RNA polymerase II (Pol II)-dependent transcription. TFIID recognizes and binds promoters via its subunit TBP, a TATA-box-binding protein, and promotes assembly of the pre-initiation complex (PIC). The TFIID complex consists of TBP and TBP-associated factors (TAFs), including TAF1, TAF2, TAF3, TAF4, TAF5, TAF6, TAF7, TAF8, TAF9, TAF10, TAF11, TAF12 and TAF13. TAF13, together with TAF11 and TBP, play key roles during promoter binding by the TFIID and TFIIA transcription factor complexes. In Bos taurus (Bovine), this protein is Transcription initiation factor TFIID subunit 13.